The following is a 274-amino-acid chain: Rhamnulose-1-phosphate aldolase (274 aa).

Glutamate 117 is an active-site residue. Zn(2+) contacts are provided by histidine 141, histidine 143, and histidine 212.

The protein belongs to the aldolase class II family. RhaD subfamily. In terms of assembly, homotetramer. The cofactor is Zn(2+).

The protein localises to the cytoplasm. The enzyme catalyses L-rhamnulose 1-phosphate = (S)-lactaldehyde + dihydroxyacetone phosphate. The protein operates within carbohydrate degradation; L-rhamnose degradation; glycerone phosphate from L-rhamnose: step 3/3. Functionally, catalyzes the reversible cleavage of L-rhamnulose-1-phosphate to dihydroxyacetone phosphate (DHAP) and L-lactaldehyde. This Escherichia coli O81 (strain ED1a) protein is Rhamnulose-1-phosphate aldolase.